A 304-amino-acid polypeptide reads, in one-letter code: MDTAAVDRIIEKLIEVRSSNPGKLVQLSESEIKQLCVASRDIFLKQPNLLESEAPIKTRGDIHGQYSDLLRLFEYGGFPPEANYLFLGDYVDRGRQSLETICLLLAYKIKYPENFFLLRGNHECASINRIYGFYDECKRRFNVKLWKSFTDCFNCLPVAALIDEKILCMHGGLSPDLSSLDQIRNLPRPTAIPDTGLLCDLQRSDPGKDVKGWGMNDRGVSYTFGPDKVSEFLSKHDLDLVCRAHQVVEDGYEFFAESELVTIFSAPNYCGEFDNAGAMMSVDENLLCSFQILKPAEKKNKFVM.

Mn(2+) is bound by residues Asp61, His63, Asp89, and Asn121. Residue His122 is the Proton donor of the active site. Residues His170 and His245 each contribute to the Mn(2+) site.

This sequence belongs to the PPP phosphatase family. PP-1 subfamily. Requires Mn(2+) as cofactor.

The enzyme catalyses O-phospho-L-seryl-[protein] + H2O = L-seryl-[protein] + phosphate. The catalysed reaction is O-phospho-L-threonyl-[protein] + H2O = L-threonyl-[protein] + phosphate. The protein is Serine/threonine-protein phosphatase PP1 isozyme 3 (NPP3) of Nicotiana tabacum (Common tobacco).